A 148-amino-acid polypeptide reads, in one-letter code: Urease accessory protein UreE (148 aa).

It belongs to the UreE family.

The protein localises to the cytoplasm. In terms of biological role, involved in urease metallocenter assembly. Binds nickel. Probably functions as a nickel donor during metallocenter assembly. The chain is Urease accessory protein UreE from Bacillus sp. (strain TB-90).